Here is a 661-residue protein sequence, read N- to C-terminus: 1-deoxy-D-xylulose-5-phosphate synthase (661 aa).

Residues His98 and 139–141 (AHS) contribute to the thiamine diphosphate site. Asp170 contributes to the Mg(2+) binding site. Residues 171-172 (GA), Asn199, Tyr309, and Glu391 each bind thiamine diphosphate. Mg(2+) is bound at residue Asn199.

Belongs to the transketolase family. DXPS subfamily. In terms of assembly, homodimer. The cofactor is Mg(2+). Thiamine diphosphate serves as cofactor.

It carries out the reaction D-glyceraldehyde 3-phosphate + pyruvate + H(+) = 1-deoxy-D-xylulose 5-phosphate + CO2. It participates in metabolic intermediate biosynthesis; 1-deoxy-D-xylulose 5-phosphate biosynthesis; 1-deoxy-D-xylulose 5-phosphate from D-glyceraldehyde 3-phosphate and pyruvate: step 1/1. Its function is as follows. Catalyzes the acyloin condensation reaction between C atoms 2 and 3 of pyruvate and glyceraldehyde 3-phosphate to yield 1-deoxy-D-xylulose-5-phosphate (DXP). The sequence is that of 1-deoxy-D-xylulose-5-phosphate synthase from Bradyrhizobium diazoefficiens (strain JCM 10833 / BCRC 13528 / IAM 13628 / NBRC 14792 / USDA 110).